The following is a 349-amino-acid chain: Gibberellin 3-beta-dioxygenase 3 (349 aa).

Positions 201 to 305 (SIQSFLQLNS…RVSAAYFAGP (105 aa)) constitute a Fe2OG dioxygenase domain. Fe cation contacts are provided by histidine 226, aspartate 228, and histidine 286. Arginine 296 is a catalytic residue.

It belongs to the iron/ascorbate-dependent oxidoreductase family. GA3OX subfamily. L-ascorbate serves as cofactor. Fe cation is required as a cofactor. In terms of tissue distribution, expressed in flower clusters and siliques.

It catalyses the reaction gibberellin A20 + 2-oxoglutarate + O2 = gibberellin A1 + succinate + CO2. Its pathway is plant hormone biosynthesis; gibberellin biosynthesis. Functionally, converts the inactive gibberellin (GA) precursors GA9 and GA20 in the bioactives gibberellins GA4 and GA1. Involved in the production of bioactive GA for reproductive development. In Arabidopsis thaliana (Mouse-ear cress), this protein is Gibberellin 3-beta-dioxygenase 3 (GA3OX3).